The sequence spans 558 residues: Oxygen-dependent choline dehydrogenase (558 aa).

4-33 is a binding site for FAD; it reads DYIIIGAGSAGNVLATRLTEDSDTTVLLLE. The Proton acceptor role is filled by H473.

The protein belongs to the GMC oxidoreductase family. The cofactor is FAD.

The enzyme catalyses choline + A = betaine aldehyde + AH2. It catalyses the reaction betaine aldehyde + NAD(+) + H2O = glycine betaine + NADH + 2 H(+). Its pathway is amine and polyamine biosynthesis; betaine biosynthesis via choline pathway; betaine aldehyde from choline (cytochrome c reductase route): step 1/1. Involved in the biosynthesis of the osmoprotectant glycine betaine. Catalyzes the oxidation of choline to betaine aldehyde and betaine aldehyde to glycine betaine at the same rate. In Citrobacter koseri (strain ATCC BAA-895 / CDC 4225-83 / SGSC4696), this protein is Oxygen-dependent choline dehydrogenase.